The primary structure comprises 164 residues: CB1 cannabinoid receptor-interacting protein 1 (164 aa).

The protein belongs to the CNRIP family. In terms of assembly, interacts with the cannabinoid receptor CNR1 (via C-terminus). Does not interact with cannabinoid receptor CNR2.

Suppresses cannabinoid receptor CNR1-mediated tonic inhibition of voltage-gated calcium channels. Functionally, does not suppress cannabinoid receptor CNR1-mediated tonic inhibition of voltage-gated calcium channels. In Homo sapiens (Human), this protein is CB1 cannabinoid receptor-interacting protein 1 (CNRIP1).